We begin with the raw amino-acid sequence, 125 residues long: Large ribosomal subunit protein uL18 (125 aa).

This sequence belongs to the universal ribosomal protein uL18 family. Part of the 50S ribosomal subunit; part of the 5S rRNA/L5/L18/L25 subcomplex. Contacts the 5S and 23S rRNAs.

Its function is as follows. This is one of the proteins that bind and probably mediate the attachment of the 5S RNA into the large ribosomal subunit, where it forms part of the central protuberance. This chain is Large ribosomal subunit protein uL18, found in Anaplasma marginale (strain Florida).